The primary structure comprises 426 residues: Immunoglobulin mu Fc receptor (426 aa).

Positions 1–16 (MNLWLWLLYFLPVSGT) are cleaved as a signal peptide. The Ig-like domain maps to 24–121 (RLEVELGGSV…GKTQKVTLNV (98 aa)). 2 disulfides stabilise this stretch: cysteine 37/cysteine 103 and cysteine 49/cysteine 58. Position 91 is a phosphothreonine (threonine 91). A disordered region spans residues 178–212 (KTEAPPVHQPSTNTSVSRHPRVYGASSETPTKPSA). A helical transmembrane segment spans residues 267–287 (FHILIPTFLGFLLLVLLGLVV). 2 disordered regions span residues 306–346 (RRMR…REPD) and 401–426 (DSND…PSRQ). Residues 415–426 (PSKPPGPRPSRQ) show a composition bias toward pro residues.

In terms of assembly, interacts (via Ig-like domain) with IGHM (via CH4/Cmu4 domain), both secreted and membrane-bound IgM; the interaction is glycan-independent and multivalent theoretically involving up to eight binding sites for the IgM pentamer. Phosphorylated on both Tyr and Ser residues. Post-translationally, O-glycosylated. Sialylated. O-linked glycans regulate trafficking to the plasma membrane.

The protein resides in the cell membrane. It is found in the early endosome membrane. Its subcellular location is the golgi apparatus. It localises to the trans-Golgi network membrane. The protein localises to the lysosome membrane. In terms of biological role, high-affinity Fc receptor for immunoglobulin M (IgM), both secreted and membrane-bound IgM. Primarily regulates IgM transport and homeostasis. In lymphoid cells, enables exocytosis of membrane-bound IgM on the plasma membrane as well as endocytosis of IgM-antigen complexes toward lysosomes for degradation. In mucosal epithelium, mediates retrotranscytosis of antigen-IgM complexes across mucosal M cells toward antigen-presenting cells in mucosal lymphoid tissues. Triggers costimulatory signaling and mediates most of IgM effector functions involved in B cell development and primary immune response to infection. Likely limits tonic IgM BCR signaling to self-antigens for proper negative selection of autoreactive B cells in the bone marrow and for the maintenance of regulatory B cell pool in peripheral lymphoid organs. Mediates antibody responses to T cell-dependent and T cell-independent antigens and promotes induction of an efficient neutralizing IgG response. Engages in cross-talk with antigen-receptor signaling via the non-canonical NF-kappa-B, MAP kinases and calcium signaling pathways. The chain is Immunoglobulin mu Fc receptor from Rattus norvegicus (Rat).